The sequence spans 222 residues: UPF0758 protein Ppha_0935 (222 aa).

Positions 100 to 222 (KIQAARDVFE…CFSFRESGLL (123 aa)) constitute an MPN domain. Zn(2+)-binding residues include H171, H173, and D184. The JAMM motif signature appears at 171-184 (HNHPSGDVEPSNAD).

This sequence belongs to the UPF0758 family.

The polypeptide is UPF0758 protein Ppha_0935 (Pelodictyon phaeoclathratiforme (strain DSM 5477 / BU-1)).